Here is a 283-residue protein sequence, read N- to C-terminus: Nicotine 6-hydroxylase medium subunit (283 aa).

An FAD-binding PCMH-type domain is found at 1–176 (MKLPAIRYAS…TDVWIPSRPN (176 aa)). Residues 31–35 (AGGQS) and 110–114 (TLGGS) each bind FAD.

In terms of assembly, heterotrimer composed of a large subunit (NdhL), a medium subunit (NdhM) and a small subunit (NdhS). It depends on FAD as a cofactor.

The protein resides in the cytoplasm. It catalyses the reaction (R)-nicotine + A + H2O = (R)-6-hydroxynicotine + AH2. It carries out the reaction (S)-nicotine + A + H2O = (S)-6-hydroxynicotine + AH2. It participates in alkaloid degradation; nicotine degradation; 6-hydroxypseudooxynicotine from nicotine (R-isomer route): step 1/2. It functions in the pathway alkaloid degradation; nicotine degradation; 6-hydroxypseudooxynicotine from nicotine (S-isomer route): step 1/2. Nicotine dehydrogenase activity is inhibited by tungsten. In terms of biological role, component of the nicotine 6-hydroxylase, which is involved in the degradation of nicotine. Catalyzes the hydroxylation of the pyridine ring at C6 to form 6-hydroxynicotine. Can use both L-nicotine and D-nicotine. In Paenarthrobacter nicotinovorans (Arthrobacter nicotinovorans), this protein is Nicotine 6-hydroxylase medium subunit.